A 554-amino-acid chain; its full sequence is Muellerian-inhibiting factor (554 aa).

The signal sequence occupies residues 1 to 24 (MQGPHLSPLVLLLATMGAVLQPEA). Residues 25 to 446 (VENLATNTRG…GREGRGRTGR (422 aa)) constitute a propeptide that is removed on maturation. N-linked (GlcNAc...) asparagine glycosylation is found at Asn62, Asn326, and Asn410. 3 disulfide bridges follow: Cys456–Cys520, Cys482–Cys551, and Cys486–Cys553.

This sequence belongs to the TGF-beta family. Homodimer; disulfide-linked. Preproprotein is proteolytically processed to generate N- and C-terminal cleavage products that homodimerize and associate to form a biologically active non-covalent complex. Binding of the non-covalent complex to AMHRII induces dissociation of the pro-region from the mature C-terminal dimer. The N-terminal portion of the protein, despite having no intrinsic activity, has the role of amplifying the activity of the C-terminus. As to expression, expressed in Sertoli cells of fetal testes, and in testes just after birth, but absent in adult testes. In female, AMH is expressed after birth in the granulosa cells of the follicle.

The protein resides in the secreted. Functionally, plays an important role in several reproductive functions, including Muellerian duct regression during male fetal sexua,l differentiation and in the adult plays a role in Leydig cell differentiation and function. In female acts as a negative regulator of the primordial to primary follicle transition and decreases FSH sensitivity of growing follicles. Binds to its sole type II receptor, AMHR2 that recruits type I receptors ACVR1 and BMPR1A which subsequently activates the Smad pathway. This Mus musculus (Mouse) protein is Muellerian-inhibiting factor (Amh).